The primary structure comprises 321 residues: uncharacterized protein (321 aa).

Belongs to the NAD(P)-dependent epimerase/dehydratase family.

This is an uncharacterized protein from Staphylococcus aureus (strain COL).